The sequence spans 207 residues: Small ribosomal subunit protein uS4 (207 aa).

The segment at 31-54 (KSKFETKPGQHGRTSGSRTSDFGL) is disordered. Positions 42 to 52 (GRTSGSRTSDF) are enriched in polar residues. Positions 97-158 (SRLDNVVYRM…KAKKQLRVTE (62 aa)) constitute an S4 RNA-binding domain.

It belongs to the universal ribosomal protein uS4 family. In terms of assembly, part of the 30S ribosomal subunit. Contacts protein S5. The interaction surface between S4 and S5 is involved in control of translational fidelity.

In terms of biological role, one of the primary rRNA binding proteins, it binds directly to 16S rRNA where it nucleates assembly of the body of the 30S subunit. Functionally, with S5 and S12 plays an important role in translational accuracy. The protein is Small ribosomal subunit protein uS4 of Methylibium petroleiphilum (strain ATCC BAA-1232 / LMG 22953 / PM1).